The following is a 351-amino-acid chain: Amylovoran biosynthesis glycosyltransferase AmsD (351 aa).

This sequence belongs to the glycosyltransferase group 1 family. Glycosyltransferase 4 subfamily.

It functions in the pathway glycan metabolism; exopolysaccharide biosynthesis. In terms of biological role, involved in the biosynthesis of amylovoran which functions as a virulence factor. May be involved in the formation of galactose alpha-1,6 linkages in amylovoran. This is Amylovoran biosynthesis glycosyltransferase AmsD (amsD) from Erwinia amylovora (Fire blight bacteria).